A 153-amino-acid chain; its full sequence is Small ribosomal subunit protein uS11 (153 aa).

This sequence belongs to the universal ribosomal protein uS11 family.

This Chlamydomonas reinhardtii (Chlamydomonas smithii) protein is Small ribosomal subunit protein uS11 (RPS14).